The chain runs to 610 residues: DNA mismatch repair protein MutL (610 aa).

The protein belongs to the DNA mismatch repair MutL/HexB family.

Functionally, this protein is involved in the repair of mismatches in DNA. It is required for dam-dependent methyl-directed DNA mismatch repair. May act as a 'molecular matchmaker', a protein that promotes the formation of a stable complex between two or more DNA-binding proteins in an ATP-dependent manner without itself being part of a final effector complex. The protein is DNA mismatch repair protein MutL of Rickettsia rickettsii (strain Sheila Smith).